We begin with the raw amino-acid sequence, 169 residues long: Ribosome maturation factor RimM (169 aa).

Residues 97 to 169 (EDEYYWADLV…TITADWGLDY (73 aa)) form the PRC barrel domain.

This sequence belongs to the RimM family. As to quaternary structure, binds ribosomal protein uS19.

It localises to the cytoplasm. Its function is as follows. An accessory protein needed during the final step in the assembly of 30S ribosomal subunit, possibly for assembly of the head region. Essential for efficient processing of 16S rRNA. May be needed both before and after RbfA during the maturation of 16S rRNA. It has affinity for free ribosomal 30S subunits but not for 70S ribosomes. The chain is Ribosome maturation factor RimM from Neisseria gonorrhoeae (strain ATCC 700825 / FA 1090).